A 351-amino-acid chain; its full sequence is UDP-N-acetylglucosamine--N-acetylmuramyl-(pentapeptide) pyrophosphoryl-undecaprenol N-acetylglucosamine transferase (351 aa).

UDP-N-acetyl-alpha-D-glucosamine contacts are provided by residues 13–15 (TGG), asparagine 125, arginine 161, serine 189, isoleucine 241, 260–265 (ALTVCE), and glutamine 285.

It belongs to the glycosyltransferase 28 family. MurG subfamily.

The protein resides in the cell inner membrane. It carries out the reaction di-trans,octa-cis-undecaprenyl diphospho-N-acetyl-alpha-D-muramoyl-L-alanyl-D-glutamyl-meso-2,6-diaminopimeloyl-D-alanyl-D-alanine + UDP-N-acetyl-alpha-D-glucosamine = di-trans,octa-cis-undecaprenyl diphospho-[N-acetyl-alpha-D-glucosaminyl-(1-&gt;4)]-N-acetyl-alpha-D-muramoyl-L-alanyl-D-glutamyl-meso-2,6-diaminopimeloyl-D-alanyl-D-alanine + UDP + H(+). Its pathway is cell wall biogenesis; peptidoglycan biosynthesis. Cell wall formation. Catalyzes the transfer of a GlcNAc subunit on undecaprenyl-pyrophosphoryl-MurNAc-pentapeptide (lipid intermediate I) to form undecaprenyl-pyrophosphoryl-MurNAc-(pentapeptide)GlcNAc (lipid intermediate II). The sequence is that of UDP-N-acetylglucosamine--N-acetylmuramyl-(pentapeptide) pyrophosphoryl-undecaprenol N-acetylglucosamine transferase from Haemophilus influenzae (strain PittEE).